The chain runs to 418 residues: MAKLLQSPPRFLPEEWYIANKSQYHRAEAQRSQSERLVAESQRLVEEIEKTTRKSQSDVNKKLEQRLEEVRFWKKELDDKLEQLVNQTDDLLTYKTRLERSLESYKEPLHITEKCLEYREKRVGIDLVHDVVEQELQKEADIIHGVMNLLIRTLEESTEQIRLNRSAKYNLEKDLRDKFTAITIDDVCFSLNNNSPNINFSEKVVRIEPNSVSLEDWLDFSNANVEKADKQLNNSTALKTLVDQILSQTANDLRRQCEVVDEAFINGLKETKDARNKLADHLAKVMEEIASQEKNIMALENAITQQEGPAKVAHTRLETRTHRPNVELCRDIAQYRLIKEIQEINHNVARLKETLAQAQTQLKALYRRQLALQEEIQVKENTIYIDQVLCMEMRKSIPPRDGDDHGAWEGGIRAEAIC.

4 coiled-coil regions span residues 20–107 (NKSQ…SYKE), 134–177 (QELQ…DLRD), 266–308 (NGLK…QQEG), and 332–383 (IAQY…ENTI).

This sequence belongs to the tektin family. As to quaternary structure, microtubule inner protein component of sperm flagellar doublet microtubules. Post-translationally, ubiquitinated, leading to its degradation. Deubiquitinated by USP16, promoting its stability.

It is found in the cytoplasm. The protein resides in the cytoskeleton. The protein localises to the cilium axoneme. It localises to the flagellum axoneme. Functionally, microtubule inner protein (MIP) part of the dynein-decorated doublet microtubules (DMTs) in cilia and flagellar axoneme. Forms filamentous polymers in the walls of ciliary and flagellar microtubules. This chain is Tektin-1 (Tekt1), found in Mus musculus (Mouse).